The chain runs to 374 residues: Chaperone protein DnaJ (374 aa).

One can recognise a J domain in the interval 5 to 70; the sequence is DYYDVLGVAK…DKRAAYDRFG (66 aa). The CR-type zinc-finger motif lies at 131–209; sequence GCEEKIRIPT…CHGQGRVQEY (79 aa). Zn(2+) contacts are provided by cysteine 144, cysteine 147, cysteine 161, cysteine 164, cysteine 183, cysteine 186, cysteine 197, and cysteine 200. CXXCXGXG motif repeat units lie at residues 144–151, 161–168, 183–190, and 197–204; these read CKTCDGSG, CGTCGGAG, CPECHGAG, and CRDCHGQG.

It belongs to the DnaJ family. Homodimer. Requires Zn(2+) as cofactor.

It localises to the cytoplasm. Its function is as follows. Participates actively in the response to hyperosmotic and heat shock by preventing the aggregation of stress-denatured proteins and by disaggregating proteins, also in an autonomous, DnaK-independent fashion. Unfolded proteins bind initially to DnaJ; upon interaction with the DnaJ-bound protein, DnaK hydrolyzes its bound ATP, resulting in the formation of a stable complex. GrpE releases ADP from DnaK; ATP binding to DnaK triggers the release of the substrate protein, thus completing the reaction cycle. Several rounds of ATP-dependent interactions between DnaJ, DnaK and GrpE are required for fully efficient folding. Also involved, together with DnaK and GrpE, in the DNA replication of plasmids through activation of initiation proteins. This chain is Chaperone protein DnaJ, found in Marinomonas sp. (strain MWYL1).